We begin with the raw amino-acid sequence, 356 residues long: Nicotinate-nucleotide--dimethylbenzimidazole phosphoribosyltransferase (356 aa).

Glu-317 functions as the Proton acceptor in the catalytic mechanism.

This sequence belongs to the CobT family. Homodimer.

It catalyses the reaction 5,6-dimethylbenzimidazole + nicotinate beta-D-ribonucleotide = alpha-ribazole 5'-phosphate + nicotinate + H(+). The protein operates within nucleoside biosynthesis; alpha-ribazole biosynthesis; alpha-ribazole from 5,6-dimethylbenzimidazole: step 1/2. Its function is as follows. Catalyzes the synthesis of alpha-ribazole-5'-phosphate from nicotinate mononucleotide (NAMN) and 5,6-dimethylbenzimidazole (DMB). The protein is Nicotinate-nucleotide--dimethylbenzimidazole phosphoribosyltransferase of Salmonella paratyphi A (strain AKU_12601).